The primary structure comprises 255 residues: tRNA (guanine-N(7)-)-methyltransferase (255 aa).

The segment at M1 to N30 is disordered. Over residues A17–D27 the composition is skewed to acidic residues. S-adenosyl-L-methionine-binding residues include E86, E111, D138, and D161. D161 is an active-site residue. Substrate-binding positions include K165, D197, and T232 to E235.

The protein belongs to the class I-like SAM-binding methyltransferase superfamily. TrmB family.

It carries out the reaction guanosine(46) in tRNA + S-adenosyl-L-methionine = N(7)-methylguanosine(46) in tRNA + S-adenosyl-L-homocysteine. It participates in tRNA modification; N(7)-methylguanine-tRNA biosynthesis. Catalyzes the formation of N(7)-methylguanine at position 46 (m7G46) in tRNA. The chain is tRNA (guanine-N(7)-)-methyltransferase from Burkholderia vietnamiensis (strain G4 / LMG 22486) (Burkholderia cepacia (strain R1808)).